The chain runs to 195 residues: Replication restart protein PriC (195 aa).

Belongs to the PriC family. As to quaternary structure, monomer. Component of the replication restart primosome, which is composed of PriA, PriB, PriC, DnaB and DnaT; DnaG primase associates transiently with this complex. Interacts with the C-terminus of SSB; this interaction is required to load the main replicative helicase onto substrate replication forks. Interacts with helicase DnaB alone and in the DnaB-DnaC complex, probably 1:1 binding with DnaB.

Its function is as follows. Involved in the restart of stalled replication forks, which reloads the DnaB replicative helicase on sites other than the origin of replication. Recognizes abandoned replication forks and remodels DNA single-stranded binding protein (SSB) on ssDNA to uncover a loading site for DnaB. There are several restart pathways, the PriA-PriC pathway is a minor restart pathway. Part of the minor PriC-Rep pathway for restart of stalled replication forks, which has a different substrate specificity than PriA. Part of the major restart pathway with PriA, PriB, DnaB, DnaT and DnaG primase. priB and priC have redundant roles in the cell. This Haemophilus influenzae (strain ATCC 51907 / DSM 11121 / KW20 / Rd) protein is Replication restart protein PriC.